Here is a 688-residue protein sequence, read N- to C-terminus: Glycine--tRNA ligase beta subunit (688 aa).

The protein belongs to the class-II aminoacyl-tRNA synthetase family. In terms of assembly, tetramer of two alpha and two beta subunits.

It localises to the cytoplasm. It carries out the reaction tRNA(Gly) + glycine + ATP = glycyl-tRNA(Gly) + AMP + diphosphate. In Syntrophomonas wolfei subsp. wolfei (strain DSM 2245B / Goettingen), this protein is Glycine--tRNA ligase beta subunit.